The following is a 74-amino-acid chain: Defensin J1-2 (74 aa).

Residues methionine 1–alanine 27 form the signal peptide. Intrachain disulfides connect cysteine 30–cysteine 74, cysteine 41–cysteine 61, cysteine 47–cysteine 68, and cysteine 51–cysteine 70.

It belongs to the DEFL family. In terms of assembly, monomer. Expressed in flowers and in young fruits.

It localises to the secreted. Plant defense peptide with antifungal activity against F.oxysporum and B.cinerea. The protein is Defensin J1-2 of Capsicum annuum (Capsicum pepper).